A 515-amino-acid chain; its full sequence is Synaptic vesicular amine transporter (515 aa).

Over 1–20 the chain is Cytoplasmic; sequence MALSDLVLLRWLRDSRHSRK. A helical transmembrane segment spans residues 21–41; the sequence is LILFIVFLALLLDNMLLTVVV. The Lumenal, vesicle segment spans residues 42 to 130; it reads PIIPSYLYSI…EDRDLLNENV (89 aa). N-linked (GlcNAc...) asparagine glycosylation is found at Asn-56, Asn-80, Asn-81, Asn-89, and Asn-111. A disulfide bond links Cys-118 and Cys-325. The chain crosses the membrane as a helical span at residues 131–151; sequence QVGLLFASKATVQLLTNPFIG. The Cytoplasmic segment spans residues 152-160; the sequence is LLTNRIGYP. The helical transmembrane segment at 161–181 threads the bilayer; it reads IPMFAGFCIMFISTVMFAFSS. Over 182 to 190 the chain is Lumenal, vesicle; that stretch reads SYAFLLIAR. A helical transmembrane segment spans residues 191–211; the sequence is SLQGIGSSCSSVAGMGMLASV. Residues 212 to 220 are Cytoplasmic-facing; sequence YTDDEERGK. The helical transmembrane segment at 221–243 threads the bilayer; it reads PMGIALGGLAMGVLVGPPFGSVL. Positions 229 and 233 each coordinate serotonin. Over 244–249 the chain is Lumenal, vesicle; that stretch reads YEFVGK. Residues 250-272 form a helical membrane-spanning segment; that stretch reads TAPFLVLAALVLLDGAIQLFVLQ. Residues 273 to 292 lie on the Cytoplasmic side of the membrane; that stretch reads PSRVQPESQKGTPLTTLLKD. The helical transmembrane segment at 293-312 threads the bilayer; that stretch reads PYILIAAGSICFANMGIAML. Serotonin contacts are provided by Asn-306, Ile-309, Glu-313, Phe-335, and Tyr-342. Residues 313–329 lie on the Lumenal, vesicle side of the membrane; the sequence is EPALPIWMMETMCSRKW. The chain crosses the membrane as a helical span at residues 330–353; sequence QLGVAFLPASISYLIGTNIFGILA. Topologically, residues 354 to 358 are cytoplasmic; sequence HKMGR. Residues 359-379 traverse the membrane as a helical segment; it reads WLCALLGMVIVGISILCIPFA. The Lumenal, vesicle portion of the chain corresponds to 380–390; the sequence is KNIYGLIAPNF. Residues 391-411 form a helical membrane-spanning segment; sequence GVGFAIGMVDSSMMPIMGYLV. Asp-400 contributes to the serotonin binding site. Residues 412-415 are Cytoplasmic-facing; sequence DLRH. The helical transmembrane segment at 416 to 436 threads the bilayer; it reads VSVYGSVYAIADVAFCMGYAI. Residue Tyr-434 participates in serotonin binding. The Lumenal, vesicle segment spans residues 437-441; the sequence is GPSAG. The helical transmembrane segment at 442 to 463 threads the bilayer; sequence GAIAKAIGFPWLMTIIGIIDIA. Over 464–515 the chain is Cytoplasmic; sequence FAPLCFFLRSPPAKEEKMAILMDHNCPIKRKMYTQNNVQSYPIGDDEESESD. Residues Ser-512 and Ser-514 each carry the phosphoserine; by CK2 modification.

The protein belongs to the major facilitator superfamily. Vesicular transporter family. In terms of assembly, interacts with SLC6A3. As to expression, expressed in the substantia nigra and the tuberomammillary nucleus of the posterior hypothalamus. Expressed in stomach, in particular in varicose nerve fibers and enterochromaffin-like cells in the corpus region (at protein level).

It is found in the cytoplasmic vesicle. The protein resides in the secretory vesicle. The protein localises to the synaptic vesicle membrane. Its subcellular location is the secretory vesicle membrane. It localises to the cell projection. It is found in the axon. The protein resides in the dendrite. The enzyme catalyses serotonin(in) + 2 H(+)(out) = serotonin(out) + 2 H(+)(in). The catalysed reaction is dopamine(in) + 2 H(+)(out) = dopamine(out) + 2 H(+)(in). It catalyses the reaction histamine(in) + 2 H(+)(out) = histamine(out) + 2 H(+)(in). Its activity is regulated as follows. Strongly inhibited by reserpine and tetrabenazine. Also inhibited to a lesser extent by ketanserin and fenfluramine. Reserpine and ketanserin inhibit by blocking the substrate-binding pocket. Tetrabenazine traps SLC18A2/VMAT2 in an occluded conformation and its inhibition is specific to SLC18A2/VMAT2 but not SLC18A1/VMAT1. Its function is as follows. Electrogenic antiporter that exchanges one cationic monoamine with two intravesicular protons across the membrane of secretory and synaptic vesicles. Uses the electrochemical proton gradient established by the V-type proton-pump ATPase to accumulate high concentrations of monoamines inside the vesicles prior to their release via exocytosis. Transports a variety of catecholamines such as dopamine, adrenaline and noradrenaline, histamine, and indolamines such as serotonin. Regulates the transvesicular monoaminergic gradient that determines the quantal size. Mediates somatodendritic dopamine release in hippocampal neurons, likely as part of a regulated secretory pathway that integrates retrograde synaptic signals. Acts as a primary transporter for striatal dopamine loading ensuring impulse-dependent release of dopamine at the synaptic cleft. Responsible for histamine and serotonin storage and subsequent corelease from mast cell granules. The polypeptide is Synaptic vesicular amine transporter (Slc18a2) (Rattus norvegicus (Rat)).